A 626-amino-acid chain; its full sequence is Chaperone protein HtpG (626 aa).

The segment at 1–331 is a; substrate-binding; the sequence is MSETVERHEF…TDDLPLNVSR (331 aa). The segment at 332–544 is b; it reads EMLQSTPTLQ…GMGPDLQMQR (213 aa). The tract at residues 545–626 is c; it reads LLRRAGRGFG…GTVAKPAESA (82 aa).

It belongs to the heat shock protein 90 family. Homodimer.

The protein resides in the cytoplasm. Its function is as follows. Molecular chaperone. Has ATPase activity. This chain is Chaperone protein HtpG, found in Methylorubrum populi (strain ATCC BAA-705 / NCIMB 13946 / BJ001) (Methylobacterium populi).